A 497-amino-acid chain; its full sequence is 3-ketoacyl-CoA synthase 6 (497 aa).

Transmembrane regions (helical) follow at residues 25-45 and 64-84; these read LVNH…AVEL and LVQV…YFMS. Positions 81-370 constitute an FAE domain; the sequence is YFMSKPRTIY…FLTSLIGRKI (290 aa). Active-site residues include Cys-225, His-304, His-388, His-392, His-421, and Asn-425.

Belongs to the thiolase-like superfamily. Chalcone/stilbene synthases family. In terms of tissue distribution, in epidermal cells of aerial tissues and in the tapetum of anthers near maturity. Expressed in siliques, flowers and leaves.

It localises to the endoplasmic reticulum membrane. The catalysed reaction is a very-long-chain acyl-CoA + malonyl-CoA + H(+) = a very-long-chain 3-oxoacyl-CoA + CO2 + CoA. Its pathway is lipid metabolism; fatty acid biosynthesis. Its activity is regulated as follows. Strongly inhibited by metazachlor and mefluidide. Its function is as follows. Contributes to cuticular wax and suberin biosynthesis. Involved in both decarbonylation and acyl-reduction wax synthesis pathways. Required for elongation of C24 fatty acids, an essential step of the cuticular wax production. Major condensing enzyme for stem wax and pollen coat lipid biosynthesis. The polypeptide is 3-ketoacyl-CoA synthase 6 (Arabidopsis thaliana (Mouse-ear cress)).